The following is a 277-amino-acid chain: Myelin proteolipid protein (277 aa).

Residues 1-10 are Cytoplasmic-facing; sequence MGLLECCARC. 3 S-palmitoyl cysteine lipidation sites follow: cysteine 6, cysteine 7, and cysteine 10. A helical transmembrane segment spans residues 11–36; sequence LVGAPFASLVATGLCFFGVALFCGCG. Residues 37–59 are Extracellular-facing; that stretch reads HEALTGTEKLIETYFSKNYQDYE. The chain crosses the membrane as a helical span at residues 60-88; it reads YLINVIHAFQYVIYGTASFFFLYGALLLA. Over 89–151 the chain is Cytoplasmic; that stretch reads EGFYTTGAVR…LGKWLGHPDK (63 aa). Residue cysteine 109 is the site of S-palmitoyl cysteine attachment. A Phosphoserine modification is found at serine 114. A phosphothreonine mark is found at threonine 116 and threonine 118. Cysteine 141 carries the S-palmitoyl cysteine lipid modification. The helical transmembrane segment at 152-178 threads the bilayer; the sequence is FVGITYALTVVWLLVFACSAVPVYIYF. The Extracellular portion of the chain corresponds to 179–238; sequence NTWTTCQSIAFPSKTSASIGSLCADARMYGVLPWNAFPGKVCGSNLLSICKTAEFQMTFH. Intrachain disulfides connect cysteine 184–cysteine 228 and cysteine 201–cysteine 220. Residue serine 199 is the site of O-palmitoyl serine attachment. The chain crosses the membrane as a helical span at residues 239–268; that stretch reads LFIAAFVGAAATLISLLTFMIAATYNFAVL. Topologically, residues 269–277 are cytoplasmic; sequence KLMGRGTKF.

It belongs to the myelin proteolipid protein family.

It is found in the cell membrane. Its subcellular location is the myelin membrane. Functionally, this is the major myelin protein from the central nervous system. It plays an important role in the formation or maintenance of the multilamellar structure of myelin. This is Myelin proteolipid protein (PLP1) from Macaca fascicularis (Crab-eating macaque).